The sequence spans 1697 residues: SAC3 family protein B (1697 aa).

4 disordered regions span residues 54-134 (PPAS…QPGG), 167-280 (QRPN…SRSN), 306-413 (EATR…EQAR), and 491-512 (ESER…VDGD). Low complexity predominate over residues 120–134 (QNPSPSSGQPYQPGG). The segment covering 178 to 192 (DGSRNFLKDHGEHSR) has biased composition (basic and acidic residues). Polar residues predominate over residues 193–202 (ATSPPATSHI). Residues 215–227 (RSQDSKRKSRSDI) show a composition bias toward basic and acidic residues. Composition is skewed to polar residues over residues 233 to 243 (MGFSRRNQSPV), 257 to 280 (PLSS…SRSN), and 335 to 380 (RFST…SPAT). One can recognise a PCI domain in the interval 625 to 813 (NIEQMNKTSV…KCSKLVHMKK (189 aa)).

Belongs to the SAC3 family. Interacts with SAC3A, EER5 and CML19. Interacts with UCH1 and UCH2.

It is found in the nucleus. Its function is as follows. Component of the TREX-2 complex (transcription and export complex 2), a muliprotein complex that functions in docking export-competent ribonucleoprotein particles (mRNPs) to the nuclear entrance of the nuclear pore complex (nuclear basket). TREX-2 participates in mRNA export and accurate chromatin positioning in the nucleus by tethering genes to the nuclear periphery. The protein is SAC3 family protein B of Arabidopsis thaliana (Mouse-ear cress).